Here is a 186-residue protein sequence, read N- to C-terminus: Protein GrpE (186 aa).

The segment covering 1-17 (MKDEHNQEHDLSQKELE) has biased composition (basic and acidic residues). Residues 1–32 (MKDEHNQEHDLSQKELESCENSCTCEGKKQEA) form a disordered region.

Belongs to the GrpE family. In terms of assembly, homodimer.

It is found in the cytoplasm. Participates actively in the response to hyperosmotic and heat shock by preventing the aggregation of stress-denatured proteins, in association with DnaK and GrpE. It is the nucleotide exchange factor for DnaK and may function as a thermosensor. Unfolded proteins bind initially to DnaJ; upon interaction with the DnaJ-bound protein, DnaK hydrolyzes its bound ATP, resulting in the formation of a stable complex. GrpE releases ADP from DnaK; ATP binding to DnaK triggers the release of the substrate protein, thus completing the reaction cycle. Several rounds of ATP-dependent interactions between DnaJ, DnaK and GrpE are required for fully efficient folding. The protein is Protein GrpE of Helicobacter acinonychis (strain Sheeba).